We begin with the raw amino-acid sequence, 205 residues long: Protein phosphatase inhibitor 2 family member B (205 aa).

The tract at residues 1-44 (MAASTASHRPIKGILKNKTSTTSSMVASAEQPRRSVDEELSKKS) is disordered. N-acetylalanine is present on Ala-2. 2 required for binding PPP1CC regions span residues 12–17 (KGILKN) and 43–55 (KSQK…ILAT). Over residues 17 to 26 (NKTSTTSSMV) the composition is skewed to polar residues. Over residues 31–44 (QPRRSVDEELSKKS) the composition is skewed to basic and acidic residues. A Phosphoserine modification is found at Ser-44. Phosphothreonine occurs at positions 89 and 92. The tract at residues 111–142 (EPKYRIQEQESSGEEDSDLSPEEREKKRQFEM) is disordered. Residues Ser-121, Ser-122, Ser-127, and Ser-130 each carry the phosphoserine modification. Positions 121–130 (SSGEEDSDLS) are enriched in acidic residues. Residues 131–142 (PEEREKKRQFEM) show a composition bias toward basic and acidic residues. The segment at 147 to 150 (HYNE) is required for binding PPP1CC catalytic center, displacing metal ions and inhibition of PPP1CC catalytic activity. The interval 163–205 (KDLHDDDEDEEMLETADGESMNTEESNQGSTPSDQQQNKLRSS) is disordered. Over residues 167 to 179 (DDDEDEEMLETAD) the composition is skewed to acidic residues. Positions 182-205 (SMNTEESNQGSTPSDQQQNKLRSS) are enriched in polar residues.

The protein belongs to the protein phosphatase inhibitor 2 family. In terms of assembly, interacts with PPP1CC. In terms of tissue distribution, only detected in spermatozoa, both heads and tails.

In terms of biological role, inhibitor of protein-phosphatase 1. This is Protein phosphatase inhibitor 2 family member B from Homo sapiens (Human).